The sequence spans 541 residues: Pheromone B beta 1 receptor (541 aa).

Residues 1-3 (MHP) are Extracellular-facing. The chain crosses the membrane as a helical span at residues 4 to 24 (EFAPVAFLSAASLALPLPWHW). Residues 25-33 (RAGNVATLS) are Cytoplasmic-facing. The helical transmembrane segment at 34–54 (IIAWLFIMNMIYGINAVIWAG) threads the bilayer. Topologically, residues 55 to 69 (SARITAVVYCDITTK) are extracellular. The chain crosses the membrane as a helical span at residues 70–90 (LTIGGNFALPAACLCLCIHLE). At 91–109 (RVASVRAAQTTAADKRRRT) the chain is on the cytoplasmic side. Residues 110 to 130 (IFELAMCWLLPIIFMALHYVV) form a helical membrane-spanning segment. The Extracellular portion of the chain corresponds to 131–150 (QGHRFDIVEDFGCRPATYYS). A helical membrane pass occupies residues 151-171 (IPAIFIVWVPPLTMAAASLVY). The Cytoplasmic portion of the chain corresponds to 172–205 (ASLAIRHFMHRRLSFAMHLQARSSALTTSRYLRL). Residues 206–226 (ILMAIVQLVWLVVTTAYTLWF) form a helical membrane-spanning segment. Topologically, residues 227-264 (SSMTLNLRPWTTWADVHSNFGRIQTWPAIITPAVILRG) are extracellular. Residues 265–285 (ACTLWWMVPASTWIFVAFFAF) form a helical membrane-spanning segment. Over 286-541 (GNDAVEEYKR…IASVFPGGRR (256 aa)) the chain is Cytoplasmic. 2 disordered regions span residues 364 to 393 (TTST…PLDS) and 414 to 541 (YTIE…GGRR). Residues 372–385 (MPPPYSLPPPPPPQ) are compositionally biased toward pro residues. Over residues 420 to 429 (PETPSTSSST) the composition is skewed to low complexity. 2 stretches are compositionally biased toward pro residues: residues 467-478 (IPAPPSLPPPTH) and 493-502 (SRPPAFPPYP).

The protein belongs to the G-protein coupled receptor 4 family.

It localises to the membrane. Receptor for the BBP1 pheromone, a prenylated mating factor. This is Pheromone B beta 1 receptor (BBR1) from Schizophyllum commune (Split gill fungus).